Reading from the N-terminus, the 196-residue chain is Cell division protein SepF (196 aa).

The segment at 15–80 (VEDDEEFNEP…PKRSASTFSK (66 aa)) is disordered. Residues 56 to 79 (RPAQSTPKPQAQTAAPKRSASTFS) show a composition bias toward polar residues.

This sequence belongs to the SepF family. As to quaternary structure, homodimer. Interacts with FtsZ.

The protein localises to the cytoplasm. Cell division protein that is part of the divisome complex and is recruited early to the Z-ring. Probably stimulates Z-ring formation, perhaps through the cross-linking of FtsZ protofilaments. Its function overlaps with FtsA. This Lactococcus lactis subsp. cremoris (strain SK11) protein is Cell division protein SepF.